Reading from the N-terminus, the 274-residue chain is 1D-myo-inositol 2-acetamido-2-deoxy-alpha-D-glucopyranoside deacetylase 2 (274 aa).

Residues His6, Asp9, and His140 each contribute to the Zn(2+) site.

The protein belongs to the MshB deacetylase family. Zn(2+) is required as a cofactor.

It carries out the reaction 1D-myo-inositol 2-acetamido-2-deoxy-alpha-D-glucopyranoside + H2O = 1D-myo-inositol 2-amino-2-deoxy-alpha-D-glucopyranoside + acetate. Functionally, catalyzes the deacetylation of 1D-myo-inositol 2-acetamido-2-deoxy-alpha-D-glucopyranoside (GlcNAc-Ins) in the mycothiol biosynthesis pathway. This chain is 1D-myo-inositol 2-acetamido-2-deoxy-alpha-D-glucopyranoside deacetylase 2, found in Saccharopolyspora erythraea (strain ATCC 11635 / DSM 40517 / JCM 4748 / NBRC 13426 / NCIMB 8594 / NRRL 2338).